The primary structure comprises 317 residues: Pantothenate kinase (317 aa).

ATP is bound at residue 95-102 (GSVAVGKS).

The protein belongs to the prokaryotic pantothenate kinase family.

The protein localises to the cytoplasm. The catalysed reaction is (R)-pantothenate + ATP = (R)-4'-phosphopantothenate + ADP + H(+). The protein operates within cofactor biosynthesis; coenzyme A biosynthesis; CoA from (R)-pantothenate: step 1/5. The protein is Pantothenate kinase of Rhodopseudomonas palustris (strain BisB18).